The sequence spans 314 residues: Olfactory receptor 5P81 (314 aa).

The Extracellular portion of the chain corresponds to 1–28 (MAFLEDGNHTVVTEFILLGLTDDPVLRV). Asn-8 is a glycosylation site (N-linked (GlcNAc...) asparagine). The helical transmembrane segment at 29–49 (ILFIIILCIYLVTVSGNLSTI) threads the bilayer. Residues 50-57 (LLIRVSSQ) lie on the Cytoplasmic side of the membrane. A helical transmembrane segment spans residues 58–78 (LHHPMYFFLSHLASIDIAISS). Topologically, residues 79–102 (SVTPNMVVNFLVERSSISYIGCGI) are extracellular. A disulfide bridge links Cys-100 with Cys-192. Residues 103-123 (QLGSAVFFGAIECFLLAVMAY) form a helical membrane-spanning segment. Residues 124-136 (DRFVAICNPLLYS) lie on the Cytoplasmic side of the membrane. A helical transmembrane segment spans residues 137 to 157 (TKMSKQVCIQLLVGSYIGGFI). Topologically, residues 158–199 (HASFFTLSFVSFLFCGPNRINHFFCDFTPLVELSCSDNSVLI) are extracellular. Residues 200-220 (ILDSFSTGTIIVITVFVIAIS) form a helical membrane-spanning segment. The Cytoplasmic portion of the chain corresponds to 221 to 240 (YTCILITILKMHSTEGRHKA). A helical transmembrane segment spans residues 241–261 (FSTCTSHLTVVTLLYGTVTFI). The Extracellular segment spans residues 262 to 274 (YVMPKSSYSTDQN). A helical membrane pass occupies residues 275 to 295 (KVISVFYMVVIPMLNPIIYSL). Over 296–314 (RNNEIKGALKKQLGEKNIF) the chain is Cytoplasmic.

The protein belongs to the G-protein coupled receptor 1 family.

It localises to the cell membrane. In terms of biological role, potential odorant receptor. The polypeptide is Olfactory receptor 5P81 (Mus musculus (Mouse)).